The chain runs to 102 residues: Turripeptide OL55-like (102 aa).

In terms of processing, contains 8 disulfide bonds. Expressed by the venom duct.

Its subcellular location is the secreted. Its function is as follows. Acts as a neurotoxin by inhibiting an ion channel. The sequence is that of Turripeptide OL55-like from Lophiotoma acuta (Marbled turris).